Consider the following 402-residue polypeptide: UPF0261 protein mll9388 (402 aa).

Belongs to the UPF0261 family.

The sequence is that of UPF0261 protein mll9388 from Mesorhizobium japonicum (strain LMG 29417 / CECT 9101 / MAFF 303099) (Mesorhizobium loti (strain MAFF 303099)).